A 116-amino-acid polypeptide reads, in one-letter code: SGSCSLKTCWLQLADFRKVGDALKEKYDSAAAMKLNSRGKLVQVNSRFNAPTIHDLVYIDPSPDYCVRNESTGSLGTQGRLCNKTSEGMDGCELMCCGRGYDQFKTVQRERCHCKF.

Serine 1 carries the O-palmitoleoyl serine; by PORCN lipid modification. Residues asparagine 69 and asparagine 83 are each glycosylated (N-linked (GlcNAc...) asparagine). Residues cysteine 82 and cysteine 97 are joined by a disulfide bond.

The protein belongs to the Wnt family. Palmitoleoylation is required for efficient binding to frizzled receptors. Depalmitoleoylation leads to Wnt signaling pathway inhibition.

It localises to the secreted. Its subcellular location is the extracellular space. It is found in the extracellular matrix. Its function is as follows. Ligand for members of the frizzled family of seven transmembrane receptors. Can activate or inhibit canonical Wnt signaling, depending on receptor context. Required during embryogenesis for extension of the primary anterior-posterior axis. The chain is Protein Wnt-5a (WNT5A) from Anser caerulescens (Snow goose).